We begin with the raw amino-acid sequence, 359 residues long: UDP-3-O-acylglucosamine N-acyltransferase (359 aa).

The Proton acceptor role is filled by His256.

Belongs to the transferase hexapeptide repeat family. LpxD subfamily. As to quaternary structure, homotrimer.

The enzyme catalyses a UDP-3-O-[(3R)-3-hydroxyacyl]-alpha-D-glucosamine + a (3R)-hydroxyacyl-[ACP] = a UDP-2-N,3-O-bis[(3R)-3-hydroxyacyl]-alpha-D-glucosamine + holo-[ACP] + H(+). Its pathway is bacterial outer membrane biogenesis; LPS lipid A biosynthesis. In terms of biological role, catalyzes the N-acylation of UDP-3-O-acylglucosamine using 3-hydroxyacyl-ACP as the acyl donor. Is involved in the biosynthesis of lipid A, a phosphorylated glycolipid that anchors the lipopolysaccharide to the outer membrane of the cell. This is UDP-3-O-acylglucosamine N-acyltransferase from Rhodopseudomonas palustris (strain BisB5).